Consider the following 793-residue polypeptide: Signal transducer and activator of transcription 5A (793 aa).

Y90 bears the Phosphotyrosine mark. S128 carries the phosphoserine modification. The region spanning 589–686 (WNDGAILGFV…EVFAKYYTPV (98 aa)) is the SH2 domain. Position 682 is a phosphotyrosine (Y682). Y694 is subject to Phosphotyrosine; by JAK2. Residues 772–793 (DSLDPRLSPPAGLFTSARSSLS) are disordered. S779 is subject to Phosphoserine.

The protein belongs to the transcription factor STAT family. In terms of assembly, forms a homodimer or a heterodimer with a related family member. Binds NR3C1. Interacts with NCOA1 and SOCS7. Interacts with ERBB4. Interacts with EBF4. Post-translationally, ISGylated. In terms of processing, tyrosine phosphorylated in response to KITLG/SCF, IL2, IL3, IL7, IL15, CSF2/GMCSF, GH1, PRL, EPO and THPO. Activated KIT promotes phosphorylation on tyrosine residues and subsequent translocation to the nucleus. Tyrosine phosphorylated in response to constitutively activated FGFR1, FGFR2, FGFR3 and FGFR4. Tyrosine phosphorylation is required for DNA-binding activity and dimerization. Serine phosphorylation is also required for maximal transcriptional activity. Tyrosine phosphorylated in response to signaling via activated FLT3; wild-type FLT3 results in much weaker phosphorylation than constitutively activated mutant FLT3. Alternatively, can be phosphorylated by JAK2 at Tyr-694. As to expression, expressed in heart, lung, and weakly in muscle.

It is found in the cytoplasm. Its subcellular location is the nucleus. Carries out a dual function: signal transduction and activation of transcription. Mediates cellular responses to the cytokine KITLG/SCF and other growth factors. May mediate cellular responses to activated FGFR1, FGFR2, FGFR3 and FGFR4. Binds to the GAS element and activates PRL-induced transcription. Regulates the expression of milk proteins during lactation. The sequence is that of Signal transducer and activator of transcription 5A (Stat5a) from Rattus norvegicus (Rat).